Consider the following 499-residue polypeptide: Eukaryotic peptide chain release factor GTP-binding subunit ERF3A (499 aa).

Positions 1-69 (MELSEPIVEN…PKSVVAPPGA (69 aa)) are disordered. A compositionally biased stretch (basic and acidic residues) spans 41 to 50 (RPPEESAHEM). Residues 72–298 (KEHVNVVFIG…DNLPNFNRSV (227 aa)) form the tr-type G domain. Positions 81–88 (GHVDAGKS) are G1. Position 84-89 (84-89 (DAGKST)) interacts with GTP. The segment at 137–141 (GKTVE) is G2. The segment at 158–161 (DAPG) is G3. GTP contacts are provided by residues 220 to 223 (NKMD) and 262 to 264 (SGL). Positions 220-223 (NKMD) are G4. A G5 region spans residues 262 to 264 (SGL).

Belongs to the TRAFAC class translation factor GTPase superfamily. Classic translation factor GTPase family. ERF3 subfamily. Component of the eRF1-eRF3-GTP ternary complex, composed of ETF1/ERF1 and ERF3 (GSPT1/ERF3A or GSPT2/ERF3B) and GTP. Component of the transient SURF (SMG1-UPF1-eRF1-eRF3) complex. The ETF1-GSPT1 complex interacts with JMJD4. Interacts with PABPC1. Interacts with SHFL.

The catalysed reaction is GTP + H2O = GDP + phosphate + H(+). Functionally, GTPase component of the eRF1-eRF3-GTP ternary complex, a ternary complex that mediates translation termination in response to the termination codons UAA, UAG and UGA. GSPT1/ERF3A mediates ETF1/ERF1 delivery to stop codons: The eRF1-eRF3-GTP complex binds to a stop codon in the ribosomal A-site. GTP hydrolysis by GSPT1/ERF3A induces a conformational change that leads to its dissociation, permitting ETF1/ERF1 to accommodate fully in the A-site. Component of the transient SURF complex which recruits UPF1 to stalled ribosomes in the context of nonsense-mediated decay (NMD) of mRNAs containing premature stop codons. Required for SHFL-mediated translation termination which inhibits programmed ribosomal frameshifting (-1PRF) of mRNA from viruses and cellular genes. In Homo sapiens (Human), this protein is Eukaryotic peptide chain release factor GTP-binding subunit ERF3A (GSPT1).